The chain runs to 260 residues: Cytochrome c oxidase subunit 3 (260 aa).

Residues 1 to 15 lie on the Mitochondrial matrix side of the membrane; it reads MAHQAHAYHMVDPSP. Residues 16–34 form a helical membrane-spanning segment; the sequence is WPLTGAVAALLLTSGLAMW. Residues 35-40 are Mitochondrial intermembrane-facing; sequence FHFGSM. Residues 41-66 traverse the membrane as a helical segment; that stretch reads ILLTLGLITMVLTMIQWWRDVIREGT. The Mitochondrial matrix segment spans residues 67-72; it reads FQGHHT. Residues 73–105 traverse the membrane as a helical segment; the sequence is PPVQKGLRYGMILFITSEVFFFIGFFWAFYNSS. Over 106–128 the chain is Mitochondrial intermembrane; that stretch reads LAPTYELGECWPPTGITPLNPFE. Residues 129–152 form a helical membrane-spanning segment; that stretch reads VPLLNTAVLLASGVTVTWAHHSIM. At 153 to 155 the chain is on the mitochondrial matrix side; it reads HGD. Residues 156–183 form a helical membrane-spanning segment; it reads RKEAIQSLTLTILLGLYFTALQAMEYYE. The Mitochondrial intermembrane segment spans residues 184–190; sequence APFTIAD. The helical transmembrane segment at 191–223 threads the bilayer; it reads GVYGSTFFVATGFHGLHVIIGSLFLSVCLLRQI. Over 224 to 232 the chain is Mitochondrial matrix; it reads QYHFTSKHH. Residues 233 to 255 form a helical membrane-spanning segment; that stretch reads FGFEAAWYWHFVDVVWLFLYVSI. Residues 256–260 are Mitochondrial intermembrane-facing; that stretch reads YWWGS.

The protein belongs to the cytochrome c oxidase subunit 3 family. In terms of assembly, component of the cytochrome c oxidase (complex IV, CIV), a multisubunit enzyme composed of 14 subunits. The complex is composed of a catalytic core of 3 subunits MT-CO1, MT-CO2 and MT-CO3, encoded in the mitochondrial DNA, and 11 supernumerary subunits COX4I, COX5A, COX5B, COX6A, COX6B, COX6C, COX7A, COX7B, COX7C, COX8 and NDUFA4, which are encoded in the nuclear genome. The complex exists as a monomer or a dimer and forms supercomplexes (SCs) in the inner mitochondrial membrane with NADH-ubiquinone oxidoreductase (complex I, CI) and ubiquinol-cytochrome c oxidoreductase (cytochrome b-c1 complex, complex III, CIII), resulting in different assemblies (supercomplex SCI(1)III(2)IV(1) and megacomplex MCI(2)III(2)IV(2)).

It is found in the mitochondrion inner membrane. The catalysed reaction is 4 Fe(II)-[cytochrome c] + O2 + 8 H(+)(in) = 4 Fe(III)-[cytochrome c] + 2 H2O + 4 H(+)(out). In terms of biological role, component of the cytochrome c oxidase, the last enzyme in the mitochondrial electron transport chain which drives oxidative phosphorylation. The respiratory chain contains 3 multisubunit complexes succinate dehydrogenase (complex II, CII), ubiquinol-cytochrome c oxidoreductase (cytochrome b-c1 complex, complex III, CIII) and cytochrome c oxidase (complex IV, CIV), that cooperate to transfer electrons derived from NADH and succinate to molecular oxygen, creating an electrochemical gradient over the inner membrane that drives transmembrane transport and the ATP synthase. Cytochrome c oxidase is the component of the respiratory chain that catalyzes the reduction of oxygen to water. Electrons originating from reduced cytochrome c in the intermembrane space (IMS) are transferred via the dinuclear copper A center (CU(A)) of subunit 2 and heme A of subunit 1 to the active site in subunit 1, a binuclear center (BNC) formed by heme A3 and copper B (CU(B)). The BNC reduces molecular oxygen to 2 water molecules using 4 electrons from cytochrome c in the IMS and 4 protons from the mitochondrial matrix. This chain is Cytochrome c oxidase subunit 3 (mt-co3), found in Xenopus laevis (African clawed frog).